We begin with the raw amino-acid sequence, 323 residues long: Methionyl-tRNA formyltransferase (323 aa).

113–116 (SLLP) is a binding site for (6S)-5,6,7,8-tetrahydrofolate.

The protein belongs to the Fmt family.

It carries out the reaction L-methionyl-tRNA(fMet) + (6R)-10-formyltetrahydrofolate = N-formyl-L-methionyl-tRNA(fMet) + (6S)-5,6,7,8-tetrahydrofolate + H(+). Attaches a formyl group to the free amino group of methionyl-tRNA(fMet). The formyl group appears to play a dual role in the initiator identity of N-formylmethionyl-tRNA by promoting its recognition by IF2 and preventing the misappropriation of this tRNA by the elongation apparatus. This chain is Methionyl-tRNA formyltransferase, found in Porphyromonas gingivalis (strain ATCC 33277 / DSM 20709 / CIP 103683 / JCM 12257 / NCTC 11834 / 2561).